A 286-amino-acid polypeptide reads, in one-letter code: MTKIIDGKAVAKKVNAQTATAVAELAAQGIQPGIAVIIVGDDAASQIYVRNKNRKATKLGMHSVVRQLPATTSQDELLAIIAAYNADDSIHGILVQSPLPAQINEPLITMAIDPKKDVDGFHPTNVGKLITNFPGNYPVANTPRGIMTMLADYGVDPAGKTAVVIGRSTIVGKPMAALLTNANATVTIAHSKTADLKAVARTADILVVATGIAHLITGADIKPGATVIDVGMDRDENGKLVGDVDFDSAQGIAGLITPVPGGVGPMTIATLMQTTVELAKWSDVSE.

NADP(+) contacts are provided by residues 166–168 (GRS) and Ser-191.

Belongs to the tetrahydrofolate dehydrogenase/cyclohydrolase family. Homodimer.

The enzyme catalyses (6R)-5,10-methylene-5,6,7,8-tetrahydrofolate + NADP(+) = (6R)-5,10-methenyltetrahydrofolate + NADPH. The catalysed reaction is (6R)-5,10-methenyltetrahydrofolate + H2O = (6R)-10-formyltetrahydrofolate + H(+). It functions in the pathway one-carbon metabolism; tetrahydrofolate interconversion. Its function is as follows. Catalyzes the oxidation of 5,10-methylenetetrahydrofolate to 5,10-methenyltetrahydrofolate and then the hydrolysis of 5,10-methenyltetrahydrofolate to 10-formyltetrahydrofolate. The polypeptide is Bifunctional protein FolD (Lactiplantibacillus plantarum (strain ATCC BAA-793 / NCIMB 8826 / WCFS1) (Lactobacillus plantarum)).